A 505-amino-acid polypeptide reads, in one-letter code: GMP synthase [glutamine-hydrolyzing] (505 aa).

A Glutamine amidotransferase type-1 domain is found at 2-190 (SVVILDFGSQ…FLEICGVARD (189 aa)). The Nucleophile role is filled by Cys-79. Residues His-165 and Glu-167 contribute to the active site. The 190-residue stretch at 191–380 (WNAEHIVDEL…LGLPDAIRMR (190 aa)) folds into the GMPS ATP-PPase domain. Position 218 to 224 (218 to 224 (SGGVDSS)) interacts with ATP.

In terms of assembly, homodimer.

The catalysed reaction is XMP + L-glutamine + ATP + H2O = GMP + L-glutamate + AMP + diphosphate + 2 H(+). It participates in purine metabolism; GMP biosynthesis; GMP from XMP (L-Gln route): step 1/1. Functionally, catalyzes the synthesis of GMP from XMP. The protein is GMP synthase [glutamine-hydrolyzing] of Deinococcus geothermalis (strain DSM 11300 / CIP 105573 / AG-3a).